Reading from the N-terminus, the 363-residue chain is Dual-specificity RNA methyltransferase RlmN (363 aa).

The Proton acceptor role is filled by glutamate 102. Positions 108–349 constitute a Radical SAM core domain; it reads EKKRATLCVS…KNRGQDIGAA (242 aa). Cysteine 115 and cysteine 350 are oxidised to a cystine. Cysteine 122, cysteine 126, and cysteine 129 together coordinate [4Fe-4S] cluster. S-adenosyl-L-methionine contacts are provided by residues 174–175, serine 206, 228–230, and asparagine 307; these read GE and SLH. The S-methylcysteine intermediate role is filled by cysteine 350.

Belongs to the radical SAM superfamily. RlmN family. [4Fe-4S] cluster serves as cofactor.

It is found in the cytoplasm. The enzyme catalyses adenosine(2503) in 23S rRNA + 2 reduced [2Fe-2S]-[ferredoxin] + 2 S-adenosyl-L-methionine = 2-methyladenosine(2503) in 23S rRNA + 5'-deoxyadenosine + L-methionine + 2 oxidized [2Fe-2S]-[ferredoxin] + S-adenosyl-L-homocysteine. It catalyses the reaction adenosine(37) in tRNA + 2 reduced [2Fe-2S]-[ferredoxin] + 2 S-adenosyl-L-methionine = 2-methyladenosine(37) in tRNA + 5'-deoxyadenosine + L-methionine + 2 oxidized [2Fe-2S]-[ferredoxin] + S-adenosyl-L-homocysteine. Its function is as follows. Specifically methylates position 2 of adenine 2503 in 23S rRNA and position 2 of adenine 37 in tRNAs. m2A2503 modification seems to play a crucial role in the proofreading step occurring at the peptidyl transferase center and thus would serve to optimize ribosomal fidelity. The polypeptide is Dual-specificity RNA methyltransferase RlmN (Buchnera aphidicola subsp. Schizaphis graminum (strain Sg)).